Consider the following 83-residue polypeptide: Cell division topological specificity factor (83 aa).

The protein belongs to the MinE family.

Its function is as follows. Prevents the cell division inhibition by proteins MinC and MinD at internal division sites while permitting inhibition at polar sites. This ensures cell division at the proper site by restricting the formation of a division septum at the midpoint of the long axis of the cell. This Deinococcus deserti (strain DSM 17065 / CIP 109153 / LMG 22923 / VCD115) protein is Cell division topological specificity factor.